The following is a 310-amino-acid chain: ADP-L-glycero-D-manno-heptose-6-epimerase (310 aa).

Residues 10 to 11, 31 to 32, K38, K53, 75 to 79, and N92 each bind NADP(+); these read FI, DN, and EGACS. The Proton acceptor role is filled by Y140. Position 144 (K144) interacts with NADP(+). N169 contacts substrate. NADP(+) is bound by residues V170 and K178. The active-site Proton acceptor is K178. Substrate-binding positions include G180, H187, 201–204, R209, and Y272; that span reads FAGS.

Belongs to the NAD(P)-dependent epimerase/dehydratase family. HldD subfamily. In terms of assembly, homopentamer. NADP(+) serves as cofactor.

It carries out the reaction ADP-D-glycero-beta-D-manno-heptose = ADP-L-glycero-beta-D-manno-heptose. It participates in nucleotide-sugar biosynthesis; ADP-L-glycero-beta-D-manno-heptose biosynthesis; ADP-L-glycero-beta-D-manno-heptose from D-glycero-beta-D-manno-heptose 7-phosphate: step 4/4. Functionally, catalyzes the interconversion between ADP-D-glycero-beta-D-manno-heptose and ADP-L-glycero-beta-D-manno-heptose via an epimerization at carbon 6 of the heptose. This Sodalis glossinidius (strain morsitans) protein is ADP-L-glycero-D-manno-heptose-6-epimerase.